Here is a 478-residue protein sequence, read N- to C-terminus: Glutamine synthetase (478 aa).

Positions 16–100 (EKVEYVDVRF…INFFVHDPFT (85 aa)) constitute a GS beta-grasp domain. The GS catalytic domain occupies 108 to 478 (PRNIARKAEN…PYEFALYYDV (371 aa)). The Mg(2+) site is built by Glu133 and Glu135. Glu214 is a binding site for ATP. 2 residues coordinate Mg(2+): Glu219 and Glu227. Position 230–232 (230–232 (YQF)) interacts with ATP. L-glutamate is bound by residues 271 to 272 (NG) and Gly272. His276 is a Mg(2+) binding site. ATP contacts are provided by residues 278–280 (HQS) and Ser280. Residues Arg329, Glu335, and Arg347 each coordinate L-glutamate. Arg347, Arg352, and Lys361 together coordinate ATP. Position 366 (Glu366) interacts with Mg(2+). Arg368 contributes to the L-glutamate binding site. At Tyr406 the chain carries O-AMP-tyrosine.

It belongs to the glutamine synthetase family. Oligomer of 12 subunits arranged in the form of two hexagons. Requires Mg(2+) as cofactor.

The protein resides in the cytoplasm. The enzyme catalyses L-glutamate + NH4(+) + ATP = L-glutamine + ADP + phosphate + H(+). When cellular nitrogen levels are high, the C-terminal adenylyl transferase (AT) of GlnE inhibits GlnA by covalent transfer of an adenylyl group from ATP to Tyr-406. Conversely, when nitrogen levels are low, the N-terminal adenylyl removase (AR) of GlnE activates GlnA by removing the adenylyl group by phosphorolysis. The fully adenylated enzyme complex is inactive. Functionally, involved in nitrogen metabolism via ammonium assimilation. Catalyzes the ATP-dependent biosynthesis of glutamine from glutamate and ammonia. Also plays a key role in controlling the ammonia levels within infected host cells and so contributes to the pathogens capacity to inhibit phagosome acidification and phagosome-lysosome fusion. Involved in cell wall biosynthesis via the production of the major component poly-L-glutamine (PLG). PLG synthesis in the cell wall occurs only in nitrogen limiting conditions and on the contrary high nitrogen conditions inhibit PLG synthesis. The polypeptide is Glutamine synthetase (Mycobacterium bovis (strain ATCC BAA-935 / AF2122/97)).